The sequence spans 610 residues: DNA mismatch repair protein MutL (610 aa).

It belongs to the DNA mismatch repair MutL/HexB family.

Functionally, this protein is involved in the repair of mismatches in DNA. It is required for dam-dependent methyl-directed DNA mismatch repair. May act as a 'molecular matchmaker', a protein that promotes the formation of a stable complex between two or more DNA-binding proteins in an ATP-dependent manner without itself being part of a final effector complex. This is DNA mismatch repair protein MutL from Rickettsia conorii (strain ATCC VR-613 / Malish 7).